Consider the following 186-residue polypeptide: MTATPLTNLFLRAPDITHVAPPYCLNATWQAETAMHTSKTDSACVAVRSYLVRASCETSGTIHCFFFAVYKDTHHTPPLITELRNFADLVNHPPVLRELEDKRGVRLRCARPFSVGTIKDVSGSGASSAGEYTINGIVYHCHCRYPFSKTCWMGASAALQHLRSISSSGMAARAAEHRRVKIKIKA.

This sequence belongs to the alphaherpesvirinae HHV-1 UL55 family.

It localises to the virion tegument. Its subcellular location is the host nucleus matrix. This Homo sapiens (Human) protein is Tegument protein UL55.